Consider the following 154-residue polypeptide: Ascorbate-specific PTS system EIIA component (154 aa).

The PTS EIIA type-2 domain occupies 6 to 150 (SLAENKSIRL…QEVLDLIDRT (145 aa)). Histidine 68 serves as the catalytic Tele-phosphohistidine intermediate. Histidine 68 is subject to Phosphohistidine.

It is found in the cytoplasm. Its function is as follows. The phosphoenolpyruvate-dependent sugar phosphotransferase system (sugar PTS), a major carbohydrate active transport system, catalyzes the phosphorylation of incoming sugar substrates concomitantly with their translocation across the cell membrane. The enzyme II UlaABC PTS system is involved in ascorbate transport. The protein is Ascorbate-specific PTS system EIIA component (ulaC) of Shigella flexneri.